Here is a 120-residue protein sequence, read N- to C-terminus: MFLLYEYDIFWAFLMISSVIPILAFLISGVLAPISEGPEKLSSYESGIEPIGDAWIQFRIRYYMFALVFVVFDVETVFLYPWAVSFDILGVYVFIEALIFVLIPVVGSVYAWRKGALEWS.

A run of 3 helical transmembrane segments spans residues isoleucine 9–glycine 29, methionine 64–valine 84, and isoleucine 88–serine 108.

Belongs to the complex I subunit 3 family. As to quaternary structure, NDH is composed of at least 16 different subunits, 5 of which are encoded in the nucleus.

The protein resides in the plastid. It localises to the chloroplast thylakoid membrane. It catalyses the reaction a plastoquinone + NADH + (n+1) H(+)(in) = a plastoquinol + NAD(+) + n H(+)(out). It carries out the reaction a plastoquinone + NADPH + (n+1) H(+)(in) = a plastoquinol + NADP(+) + n H(+)(out). Functionally, NDH shuttles electrons from NAD(P)H:plastoquinone, via FMN and iron-sulfur (Fe-S) centers, to quinones in the photosynthetic chain and possibly in a chloroplast respiratory chain. The immediate electron acceptor for the enzyme in this species is believed to be plastoquinone. Couples the redox reaction to proton translocation, and thus conserves the redox energy in a proton gradient. This is NAD(P)H-quinone oxidoreductase subunit 3, chloroplastic from Nymphaea alba (White water-lily).